The following is a 419-amino-acid chain: D-inositol 3-phosphate glycosyltransferase (419 aa).

Residue His-9 participates in 1D-myo-inositol 3-phosphate binding. Residues Gln-15–Pro-16 and Gly-23 each bind UDP-N-acetyl-alpha-D-glucosamine. Residues Asp-20–Asn-25, Lys-78, Tyr-110, Thr-134, and Arg-154 each bind 1D-myo-inositol 3-phosphate. UDP-N-acetyl-alpha-D-glucosamine is bound by residues Arg-231, Lys-236, and Arg-295. Mg(2+) contacts are provided by Tyr-304, Arg-305, and Ala-307. Residues Glu-317 and Glu-325 each coordinate UDP-N-acetyl-alpha-D-glucosamine. A Mg(2+)-binding site is contributed by Thr-331.

It belongs to the glycosyltransferase group 1 family. MshA subfamily. In terms of assembly, homodimer.

It catalyses the reaction 1D-myo-inositol 3-phosphate + UDP-N-acetyl-alpha-D-glucosamine = 1D-myo-inositol 2-acetamido-2-deoxy-alpha-D-glucopyranoside 3-phosphate + UDP + H(+). Functionally, catalyzes the transfer of a N-acetyl-glucosamine moiety to 1D-myo-inositol 3-phosphate to produce 1D-myo-inositol 2-acetamido-2-deoxy-glucopyranoside 3-phosphate in the mycothiol biosynthesis pathway. This is D-inositol 3-phosphate glycosyltransferase from Corynebacterium jeikeium (strain K411).